Consider the following 213-residue polypeptide: ATP phosphoribosyltransferase (213 aa).

This sequence belongs to the ATP phosphoribosyltransferase family. Short subfamily. Heteromultimer composed of HisG and HisZ subunits.

Its subcellular location is the cytoplasm. The catalysed reaction is 1-(5-phospho-beta-D-ribosyl)-ATP + diphosphate = 5-phospho-alpha-D-ribose 1-diphosphate + ATP. The protein operates within amino-acid biosynthesis; L-histidine biosynthesis; L-histidine from 5-phospho-alpha-D-ribose 1-diphosphate: step 1/9. In terms of biological role, catalyzes the condensation of ATP and 5-phosphoribose 1-diphosphate to form N'-(5'-phosphoribosyl)-ATP (PR-ATP). Has a crucial role in the pathway because the rate of histidine biosynthesis seems to be controlled primarily by regulation of HisG enzymatic activity. In Listeria monocytogenes serotype 4b (strain F2365), this protein is ATP phosphoribosyltransferase.